The chain runs to 525 residues: ADP-ribosylation factor GTPase-activating protein 3 (525 aa).

The Arf-GAP domain maps to 10–126 (LAIFKRLRSV…IKTLATQATR (117 aa)). A C4-type zinc finger spans residues 25–48 (CFDCGAKNPSWASISYGVFLCIDC). Residues 160-233 (VSGATQASAQ…KGLGAKKGSL (74 aa)) are disordered. Residues 162–177 (GATQASAQPEPASSTP) show a composition bias toward polar residues. Positions 222 to 233 (AKKGLGAKKGSL) are enriched in low complexity. A phosphoserine mark is found at serine 232, serine 242, serine 271, and serine 275. The disordered stretch occupies residues 249–271 (QAQAVDKRKEQEDLARGTPKEES). Positions 293–305 (LNLSGQKKAEAER) are enriched in basic and acidic residues. Disordered regions lie at residues 293–364 (LNLS…SSSR) and 377–428 (FSSW…EAQK). Residues 319–333 (HSVTSDMQTIEQESP) are compositionally biased toward polar residues. The residue at position 332 (serine 332) is a Phosphoserine. Low complexity predominate over residues 349-363 (SYFSSSSKWSEQSSS). Serine 379 is subject to Phosphoserine. Positions 387–398 (YWKKDSSRDPEP) are enriched in basic and acidic residues. Residues serine 437, serine 460, serine 462, serine 464, serine 466, and serine 467 each carry the phosphoserine modification.

The protein localises to the cytoplasm. It localises to the golgi apparatus membrane. GAP activity stimulated by phosphatidylinositol 4,5-bisphosphate (PIP2). Functionally, GTPase-activating protein (GAP) for ADP ribosylation factor 1 (ARF1). Hydrolysis of ARF1-bound GTP may lead to dissociation of coatomer from Golgi-derived membranes to allow fusion with target membranes. This chain is ADP-ribosylation factor GTPase-activating protein 3, found in Rattus norvegicus (Rat).